Here is a 308-residue protein sequence, read N- to C-terminus: Olfactory receptor 4E2 (308 aa).

Residues 1–24 are Extracellular-facing; sequence MGALNQTRVTEFIFLGLTDNWVLE. A glycan (N-linked (GlcNAc...) asparagine) is linked at asparagine 5. Residues 25–45 form a helical membrane-spanning segment; it reads ILFFVPFTVTYMLTLLGNFLI. Residues 46–57 lie on the Cytoplasmic side of the membrane; that stretch reads VVTIVFTPRLHN. Residues 58 to 78 traverse the membrane as a helical segment; sequence PMYFFLSNLSFIDICHSSVTV. Residues 79 to 97 lie on the Extracellular side of the membrane; that stretch reads PKMLEGLLLERKTISFDNC. Cysteine 97 and cysteine 179 are disulfide-bonded. The chain crosses the membrane as a helical span at residues 98-118; sequence IAQLFFLHLFACSEIFLLTIM. Histidine 105 and cysteine 109 together coordinate Cu cation. Over 119–143 the chain is Cytoplasmic; the sequence is AYDRYVAICIPLHYSNVMNMKVCVQ. Residues 144 to 164 traverse the membrane as a helical segment; it reads LVFALWLGGTIHSLVQTFLTI. The Extracellular segment spans residues 165–204; that stretch reads RLPYCGPNIIDSYFCDVPPVIKLACTDTYLTGILIVSNSG. Residues 205–225 traverse the membrane as a helical segment; the sequence is TISLVCFLALVTSYTVILFSL. Over 226–236 the chain is Cytoplasmic; the sequence is RKQSAEGRRKA. The helical transmembrane segment at 237 to 257 threads the bilayer; the sequence is LSTCSAHFMVVALFFGPCIFL. The Extracellular segment spans residues 258-268; sequence YTRPDSSFSID. Residue arginine 260 participates in Cu cation binding. A helical membrane pass occupies residues 269–289; that stretch reads KVVSVFYTVVTPLLNPLIYTL. At 290–308 the chain is on the cytoplasmic side; that stretch reads RNEEVKTAMKHLRQRRICS.

The protein belongs to the G-protein coupled receptor 1 family. As to expression, expressed in olfactory epithelium, specifically in the olfactory sensory neurons of the septal organ.

It is found in the cell membrane. Its activity is regulated as follows. Copper binding enhances receptor activity in response to odorant binding. Olfactory receptor that is activated by the binding of organosulfur odorants with thioether groups such as (methylthio)methanethiol (MTMT) and bis(methylthiomethyl) disulfide. Also binds odorants cis-cyclooctene and tert-butyl mercaptan. The activity of this receptor is mediated by G proteins which activate adenylyl cyclase (Potential). The chain is Olfactory receptor 4E2 from Mus musculus (Mouse).